A 333-amino-acid polypeptide reads, in one-letter code: Phosphate acyltransferase (333 aa).

It belongs to the PlsX family. In terms of assembly, homodimer. Probably interacts with PlsY.

Its subcellular location is the cytoplasm. The catalysed reaction is a fatty acyl-[ACP] + phosphate = an acyl phosphate + holo-[ACP]. It participates in lipid metabolism; phospholipid metabolism. Its function is as follows. Catalyzes the reversible formation of acyl-phosphate (acyl-PO(4)) from acyl-[acyl-carrier-protein] (acyl-ACP). This enzyme utilizes acyl-ACP as fatty acyl donor, but not acyl-CoA. In Bacillus subtilis (strain 168), this protein is Phosphate acyltransferase.